We begin with the raw amino-acid sequence, 590 residues long: Histone-binding protein N1/N2 (590 aa).

The disordered stretch occupies residues 1–30 (MAEETAALSTEKTEDTSTAPSTSAEKADGI). The stretch at 36–69 (AKRLMGAGQKHLVMKDVRSAVNLFQEASSLLAKQ) is one TPR 1 repeat. Positions 102–328 (ALEGMPEDDE…EKETEEEDVG (227 aa)) are disordered. Over residues 106–120 (MPEDDEEEAEKEEDP) the composition is skewed to acidic residues. 2 stretches are compositionally biased toward basic and acidic residues: residues 128-250 (LDEK…DAKE) and 262-275 (AEEK…ESKE). Residues 293 to 327 (EKMEEEEEGEDSEENEDGTEENEGTEEKETEEEDV) show a composition bias toward acidic residues. TPR repeat units lie at residues 357 to 390 (AQAH…QKEH) and 399 to 432 (AETH…IEKR). Positions 492–590 (GGSSGFSKEN…METATVESTA (99 aa)) are disordered. Residues 496 to 525 (GFSKENGSTSSSSAVEKSGDSTVPVTNCVS) show a composition bias toward polar residues. A Nuclear localization signal motif is present at residues 531-537 (VRKKRKT). A compositionally biased stretch (basic and acidic residues) spans 536-553 (KTEEESPLKDKDAKKSKQ).

It belongs to the NASP family.

It localises to the nucleus. Functionally, this protein is involved in nucleosome assembly. It is bound to H3 and H4 in the absence of DNA, but released from H3 and H4 in the presence of DNA. The polypeptide is Histone-binding protein N1/N2 (Xenopus laevis (African clawed frog)).